A 261-amino-acid polypeptide reads, in one-letter code: Thiamine thiazole synthase (261 aa).

NAD(+) is bound by residues Ala33, 52-53 (ER), Gly60, Val124, and 152-154 (HVD). Positions 154 and 169 each coordinate Fe cation. Ile219 is a binding site for NAD(+). Arg229 contacts glycine.

The protein belongs to the THI4 family. In terms of assembly, homooctamer; tetramer of dimers. The cofactor is Fe(2+).

It carries out the reaction hydrogen sulfide + glycine + NAD(+) = ADP-5-ethyl-4-methylthiazole-2-carboxylate + nicotinamide + 3 H2O + H(+). Its pathway is cofactor biosynthesis; thiamine diphosphate biosynthesis. Involved in the biosynthesis of the thiazole moiety of thiamine. Catalyzes the conversion of NAD and glycine to adenosine diphosphate 5-(2-hydroxyethyl)-4-methylthiazole-2-carboxylate (ADT), an adenylated thiazole intermediate, using free sulfide as a source of sulfur. The chain is Thiamine thiazole synthase from Pyrobaculum aerophilum (strain ATCC 51768 / DSM 7523 / JCM 9630 / CIP 104966 / NBRC 100827 / IM2).